Reading from the N-terminus, the 125-residue chain is Acidic phospholipase A2 HTe (125 aa).

Cystine bridges form between Cys-11–Cys-77, Cys-27–Cys-124, Cys-29–Cys-45, Cys-44–Cys-105, Cys-51–Cys-98, Cys-61–Cys-91, and Cys-84–Cys-96. The Ca(2+) site is built by Tyr-28, Gly-30, and Gly-32. Residue His-48 is part of the active site. Asp-49 provides a ligand contact to Ca(2+). Residue Asp-99 is part of the active site.

It belongs to the phospholipase A2 family. Group I subfamily. D49 sub-subfamily. Requires Ca(2+) as cofactor. No glycosylation was detected on this protein. In terms of tissue distribution, expressed by the venom gland.

It localises to the secreted. The catalysed reaction is a 1,2-diacyl-sn-glycero-3-phosphocholine + H2O = a 1-acyl-sn-glycero-3-phosphocholine + a fatty acid + H(+). Functionally, snake venom phospholipase A2 (PLA2) that blocks neuromuscular transmission, but that does not produce blockade by virtue of a selective action on nerve endings. Instead, the toxin acts both on nerve and on muscle. PLA2 catalyzes the calcium-dependent hydrolysis of the 2-acyl groups in 3-sn-phosphoglycerides. In Notechis scutatus scutatus (Mainland tiger snake), this protein is Acidic phospholipase A2 HTe.